The sequence spans 179 residues: Shikimate kinase (179 aa).

22–27 (GTGKSS) provides a ligand contact to ATP. Ser26 provides a ligand contact to Mg(2+). Substrate-binding residues include Asp44, Arg68, and Gly90. Arg128 serves as a coordination point for ATP. Residue Arg147 participates in substrate binding.

It belongs to the shikimate kinase family. In terms of assembly, monomer. Mg(2+) is required as a cofactor.

It localises to the cytoplasm. It carries out the reaction shikimate + ATP = 3-phosphoshikimate + ADP + H(+). The protein operates within metabolic intermediate biosynthesis; chorismate biosynthesis; chorismate from D-erythrose 4-phosphate and phosphoenolpyruvate: step 5/7. Its function is as follows. Catalyzes the specific phosphorylation of the 3-hydroxyl group of shikimic acid using ATP as a cosubstrate. The protein is Shikimate kinase of Geobacter metallireducens (strain ATCC 53774 / DSM 7210 / GS-15).